Consider the following 45-residue polypeptide: Large ribosomal subunit protein bL34 (45 aa).

It belongs to the bacterial ribosomal protein bL34 family.

The chain is Large ribosomal subunit protein bL34 from Salinispora arenicola (strain CNS-205).